The chain runs to 650 residues: SUMO-activating enzyme subunit 2 (650 aa).

ATP is bound by residues 25–30 (GAGGIG), Asp49, 57–60 (NLNR), Lys73, 96–97 (SI), and 118–123 (DNRAAR). The Zn(2+) site is built by Cys159 and Cys162. Cys174 acts as the Glycyl thioester intermediate in catalysis. Lys191 is covalently cross-linked (Glycyl lysine isopeptide (Lys-Gly) (interchain with G-Cter in SUMO)). Lys237 is covalently cross-linked (Glycyl lysine isopeptide (Lys-Gly) (interchain with G-Cter in SUMO1)). Glycyl lysine isopeptide (Lys-Gly) (interchain with G-Cter in SUMO) cross-links involve residues Lys258, Lys282, and Lys286. 2 residues coordinate Zn(2+): Cys446 and Cys449. The tract at residues 554 to 650 (DAPDKAPAPS…DDDEDIIALD (97 aa)) is disordered. Polar residues predominate over residues 572 to 586 (ANGNKDSAQPSTSSK). The segment covering 590–603 (EDDDVLLVDSDEEP) has biased composition (acidic residues). Phosphoserine is present on Ser599. Residues Lys618 and Lys630 each participate in a glycyl lysine isopeptide (Lys-Gly) (interchain with G-Cter in SUMO) cross-link. Residues 638–650 (PADDDDEDIIALD) show a composition bias toward acidic residues.

This sequence belongs to the ubiquitin-activating E1 family. As to quaternary structure, heterodimer of sae1 and uba2/sae2. The heterodimer corresponds to the two domains that are encoded on a single polypeptide chain in ubiquitin-activating enzyme E1. Interacts with ube2i. Post-translationally, sumoylated with SUMO1 and SUMO2/3 and by UBC9. Sumoylation at Lys-237 inhibits enzymatic activity. Sumoylation at the C-terminal lysine cluster plays an essential role in nuclear trafficking. Expressed in eye, brain and pectoral fins.

The protein resides in the cytoplasm. It is found in the nucleus. The protein operates within protein modification; protein sumoylation. Functionally, the heterodimer acts as an E1 ligase for sumo1, sumo2, and sumo3. It mediates ATP-dependent activation of sumo proteins followed by formation of a thioester bond between a sumo protein and a conserved active site cysteine residue on uba2/sae2. This Danio rerio (Zebrafish) protein is SUMO-activating enzyme subunit 2 (uba2).